A 449-amino-acid chain; its full sequence is Delta(8)-fatty-acid desaturase 1 (449 aa).

The 85-residue stretch at 7-91 (KKYITNEDLK…IRDFQVSEVS (85 aa)) folds into the Cytochrome b5 heme-binding domain. Heme-binding residues include His-42 and His-65. 2 consecutive transmembrane segments (helical) span residues 113-133 (VTLYTLAFVAAMFLGVLYGVL) and 138-158 (VFAHQIAAALLGLLWIQSAYI). A Histidine box-1 motif is present at residues 160-164 (HDSGH). A helical transmembrane segment spans residues 173-195 (YNRFAQLLSGNCLTGISIAWWKW). The Histidine box-2 signature appears at 197 to 201 (HNAHH). The next 3 helical transmembrane spans lie at 255–275 (YYPVMCFGRINLFIQTFLLLF), 284–304 (ALNFAGILVFWTWFPLLVSCL), and 311–331 (FFFVFTSFTVTALQHIQFTLN). A Histidine box-3 motif is present at residues 374–378 (QLEHH).

The protein belongs to the fatty acid desaturase type 1 family. Fe cation serves as cofactor. As to expression, highly expressed in flowers. Expressed in roots, leaves, stems and siliques.

The protein localises to the endoplasmic reticulum membrane. The catalysed reaction is an N-acyl-(4R)-4-hydroxysphinganine + 2 Fe(II)-[cytochrome b5] + O2 + 2 H(+) = a (4R,8E)-4-hydroxysphingenine ceramide + 2 Fe(III)-[cytochrome b5] + 2 H2O. It catalyses the reaction an N-acyl-(4R)-4-hydroxysphinganine + 2 Fe(II)-[cytochrome b5] + O2 + 2 H(+) = a (4R,8Z)-4-hydroxysphing-8-enine ceramide + 2 Fe(III)-[cytochrome b5] + 2 H2O. Functionally, plays a major role as delta(8)-fatty-acid desaturase which introduces a double bond at the 8-position in the long-chain base (LCB) of ceramides with or without a hydroxy group at the 4-position. The enzyme produces both the 8E and 8Z isomers (in a 4:1 ratio). This structural modification contributes to the quantitative partitioning of ceramides between the two major sphingolipid classes, glucosylceramides and glycosylinositolphosphoryl ceramides. Sphingolipids are important membrane components involved in environmental stress responses, such as resistance to chilling, and act as cell signaling molecules. This chain is Delta(8)-fatty-acid desaturase 1 (SLD1), found in Arabidopsis thaliana (Mouse-ear cress).